A 446-amino-acid polypeptide reads, in one-letter code: Phosphoglucosamine mutase (446 aa).

Catalysis depends on Ser103, which acts as the Phosphoserine intermediate. 4 residues coordinate Mg(2+): Ser103, Asp242, Asp244, and Asp246. A Phosphoserine modification is found at Ser103.

This sequence belongs to the phosphohexose mutase family. The cofactor is Mg(2+). Post-translationally, activated by phosphorylation.

It carries out the reaction alpha-D-glucosamine 1-phosphate = D-glucosamine 6-phosphate. Catalyzes the conversion of glucosamine-6-phosphate to glucosamine-1-phosphate. The chain is Phosphoglucosamine mutase from Vibrio cholerae serotype O1 (strain ATCC 39315 / El Tor Inaba N16961).